The following is a 218-amino-acid chain: 3,4-dihydroxy-2-butanone 4-phosphate synthase (218 aa).

D-ribulose 5-phosphate-binding positions include 38–39 (RE), Asp-43, 151–155 (RRGHT), and Glu-175. Glu-39 contributes to the Mg(2+) binding site. Residues 125–151 (PHAKPEDLARPGHVFPLRARPGGVMTR) are disordered. Residue His-154 coordinates Mg(2+).

The protein belongs to the DHBP synthase family. Homodimer. It depends on Mg(2+) as a cofactor. Requires Mn(2+) as cofactor.

The enzyme catalyses D-ribulose 5-phosphate = (2S)-2-hydroxy-3-oxobutyl phosphate + formate + H(+). The protein operates within cofactor biosynthesis; riboflavin biosynthesis; 2-hydroxy-3-oxobutyl phosphate from D-ribulose 5-phosphate: step 1/1. Catalyzes the conversion of D-ribulose 5-phosphate to formate and 3,4-dihydroxy-2-butanone 4-phosphate. The polypeptide is 3,4-dihydroxy-2-butanone 4-phosphate synthase (Vibrio parahaemolyticus serotype O3:K6 (strain RIMD 2210633)).